The following is a 199-amino-acid chain: B3 domain-containing protein Os06g0107800 (199 aa).

A disordered region spans residues Q13–R32. Over residues Q15–G29 the composition is skewed to gly residues. Residues F37 to A141 constitute a DNA-binding region (TF-B3).

The protein resides in the nucleus. The sequence is that of B3 domain-containing protein Os06g0107800 from Oryza sativa subsp. japonica (Rice).